A 118-amino-acid polypeptide reads, in one-letter code: Hydrogenase maturation factor HypA (118 aa).

H2 is a binding site for Ni(2+). Residues C74, C77, C91, and C94 each contribute to the Zn(2+) site.

This sequence belongs to the HypA/HybF family.

In terms of biological role, involved in the maturation of [NiFe] hydrogenases. Required for nickel insertion into the metal center of the hydrogenase. This Helicobacter hepaticus (strain ATCC 51449 / 3B1) protein is Hydrogenase maturation factor HypA.